The sequence spans 214 residues: Nigrelysin (214 aa).

Positions 1–21 are cleaved as a signal peptide; it reads MKNRLVIIVFMVVTMLCASLA. A propeptide spanning residues 22 to 35 is cleaved from the precursor; it reads LPLEEKEDEKDEKR. A plays an important role in the hemolytic activity region spans residues 38-47; that stretch reads EVAGAVMEGA. An N-terminal region region spans residues 46 to 65; that stretch reads GANLGMSVLQTILQAIGDVS. Phosphocholine-binding residues include serine 89, valine 122, serine 140, proline 142, tyrosine 168, tyrosine 172, and tyrosine 173. The trp-rich region, which is important for the binding to lipid membrane stretch occupies residues 140–155; sequence SVPYDYNWYSNWWNVK. The Cell attachment site, crucial for protein stability signature appears at 179-181; sequence KGD.

This sequence belongs to the actinoporin family. Sea anemone subfamily. As to quaternary structure, octamer or nonamer in membranes. Monomer in the soluble state.

It localises to the secreted. Its subcellular location is the nematocyst. The protein localises to the target cell membrane. In terms of biological role, pore-forming protein that forms cation-selective hydrophilic pores in cell membranes and causes cytolysis. Pore formation is a multi-step process that involves specific recognition of membrane sphingomyelin (but neither cholesterol nor phosphatidylcholine) using aromatic rich region and adjacent phosphocholine (POC) binding site, firm binding to the membrane (mainly driven by hydrophobic interactions) accompanied by the transfer of the N-terminal region to the lipid-water interface and finally pore formation after oligomerization of monomers. This protein shows potent hemolytic activity (EC(50)=0.09 nM), as well as potent cytotoxic activity on nucleated cells (L1210 cells). The cytotoxic process starts with cellular swelling that is time and dose dependent and occurs up to a critical volume, probably due to influx of water via pores opened by this actinoporin. The second phase consists of the final loss of membrane integrity that leads to cytolysis. The sequence is that of Nigrelysin from Anthopleura nigrescens (Sea anemone).